A 60-amino-acid chain; its full sequence is Large ribosomal subunit protein bL32 (60 aa).

The protein belongs to the bacterial ribosomal protein bL32 family.

The polypeptide is Large ribosomal subunit protein bL32 (Pseudothermotoga lettingae (strain ATCC BAA-301 / DSM 14385 / NBRC 107922 / TMO) (Thermotoga lettingae)).